A 379-amino-acid chain; its full sequence is Lactosylceramide 1,3-N-acetyl-beta-D-glucosaminyltransferase A (379 aa).

Residues 1 to 12 (MFMNCRRVKKWH) lie on the Cytoplasmic side of the membrane. The helical; Signal-anchor for type II membrane protein transmembrane segment at 13–30 (FLQLLSMCCVMSVLMVCW) threads the bilayer. The Lumenal segment spans residues 31-379 (EHVDHHVVSH…NTYSCMAAFT (349 aa)). 4 N-linked (GlcNAc...) asparagine glycosylation sites follow: asparagine 57, asparagine 113, asparagine 168, and asparagine 277.

The protein belongs to the glycosyltransferase 31 family.

The protein resides in the golgi apparatus membrane. It catalyses the reaction a beta-D-Gal-(1-&gt;4)-beta-D-Glc-(1&lt;-&gt;1)-Cer(d18:1(4E)) + UDP-N-acetyl-alpha-D-glucosamine = a beta-D-GlcNAc-(1-&gt;3)-beta-D-Gal-(1-&gt;4)-beta-D-Glc-(1&lt;-&gt;1)-Cer(d18:1(4E)) + UDP + H(+). The enzyme catalyses a neolactoside nLc4Cer(d18:1(4E)) + UDP-N-acetyl-alpha-D-glucosamine = a neolactoside IV(3)-beta-GlcNAc-nLc4Cer(d18:1(4E)) + UDP + H(+). Its pathway is protein modification; protein glycosylation. Its function is as follows. Beta-1,3-N-acetylglucosaminyltransferase that plays a key role in the synthesis of lacto- or neolacto-series carbohydrate chains on glycolipids. The chain is Lactosylceramide 1,3-N-acetyl-beta-D-glucosaminyltransferase A (b3gnt5a) from Danio rerio (Zebrafish).